Consider the following 302-residue polypeptide: Sulfate adenylyltransferase subunit 2 (302 aa).

The disordered stretch occupies residues 280 to 302; that stretch reads RQGRLIDSDQSASMEQKKRQGYF.

It belongs to the PAPS reductase family. CysD subfamily. In terms of assembly, heterodimer composed of CysD, the smaller subunit, and CysN.

The catalysed reaction is sulfate + ATP + H(+) = adenosine 5'-phosphosulfate + diphosphate. It participates in sulfur metabolism; hydrogen sulfide biosynthesis; sulfite from sulfate: step 1/3. Its function is as follows. With CysN forms the ATP sulfurylase (ATPS) that catalyzes the adenylation of sulfate producing adenosine 5'-phosphosulfate (APS) and diphosphate, the first enzymatic step in sulfur assimilation pathway. APS synthesis involves the formation of a high-energy phosphoric-sulfuric acid anhydride bond driven by GTP hydrolysis by CysN coupled to ATP hydrolysis by CysD. The chain is Sulfate adenylyltransferase subunit 2 from Shewanella baltica (strain OS223).